The following is a 617-amino-acid chain: UvrABC system protein C (617 aa).

Positions 12-91 constitute a GIY-YIG domain; sequence EKPGVYLMKD…IKKYKPKYNV (80 aa). Residues 203–238 form the UVR domain; it reads EWLVEKLKEEMQKAADELRFEEAARLRDQIFAIEKI.

It belongs to the UvrC family. As to quaternary structure, interacts with UvrB in an incision complex.

The protein localises to the cytoplasm. The UvrABC repair system catalyzes the recognition and processing of DNA lesions. UvrC both incises the 5' and 3' sides of the lesion. The N-terminal half is responsible for the 3' incision and the C-terminal half is responsible for the 5' incision. This Caldanaerobacter subterraneus subsp. tengcongensis (strain DSM 15242 / JCM 11007 / NBRC 100824 / MB4) (Thermoanaerobacter tengcongensis) protein is UvrABC system protein C.